Consider the following 394-residue polypeptide: 1-deoxy-D-xylulose 5-phosphate reductoisomerase (394 aa).

NADPH-binding residues include Thr-10, Gly-11, Ser-12, Ile-13, Gly-38, Arg-39, Asn-40, and Asn-123. Lys-124 contacts 1-deoxy-D-xylulose 5-phosphate. Glu-125 is an NADPH binding site. Position 149 (Asp-149) interacts with Mn(2+). Residues Ser-150, Glu-151, Ser-175, and His-198 each coordinate 1-deoxy-D-xylulose 5-phosphate. Glu-151 contacts Mn(2+). Gly-204 contacts NADPH. 1-deoxy-D-xylulose 5-phosphate contacts are provided by Ser-211, Asn-216, Lys-217, and Glu-220. Glu-220 contributes to the Mn(2+) binding site.

It belongs to the DXR family. Requires Mg(2+) as cofactor. It depends on Mn(2+) as a cofactor.

The enzyme catalyses 2-C-methyl-D-erythritol 4-phosphate + NADP(+) = 1-deoxy-D-xylulose 5-phosphate + NADPH + H(+). It functions in the pathway isoprenoid biosynthesis; isopentenyl diphosphate biosynthesis via DXP pathway; isopentenyl diphosphate from 1-deoxy-D-xylulose 5-phosphate: step 1/6. Its function is as follows. Catalyzes the NADPH-dependent rearrangement and reduction of 1-deoxy-D-xylulose-5-phosphate (DXP) to 2-C-methyl-D-erythritol 4-phosphate (MEP). The polypeptide is 1-deoxy-D-xylulose 5-phosphate reductoisomerase (Cereibacter sphaeroides (strain ATCC 17029 / ATH 2.4.9) (Rhodobacter sphaeroides)).